Here is a 255-residue protein sequence, read N- to C-terminus: Type III pantothenate kinase (255 aa).

6-13 (DVGNTNTV) contributes to the ATP binding site. Residue 108–111 (GADR) participates in substrate binding. Residue D110 is the Proton acceptor of the active site. D130 contacts K(+). T133 serves as a coordination point for ATP. Substrate is bound at residue T185.

The protein belongs to the type III pantothenate kinase family. Homodimer. It depends on NH4(+) as a cofactor. K(+) serves as cofactor.

The protein resides in the cytoplasm. It catalyses the reaction (R)-pantothenate + ATP = (R)-4'-phosphopantothenate + ADP + H(+). It functions in the pathway cofactor biosynthesis; coenzyme A biosynthesis; CoA from (R)-pantothenate: step 1/5. Its function is as follows. Catalyzes the phosphorylation of pantothenate (Pan), the first step in CoA biosynthesis. In Hyphomonas neptunium (strain ATCC 15444), this protein is Type III pantothenate kinase.